Reading from the N-terminus, the 124-residue chain is Large ribosomal subunit protein uL14 (124 aa).

This sequence belongs to the universal ribosomal protein uL14 family. As to quaternary structure, part of the 50S ribosomal subunit. Forms a cluster with proteins L3 and L19. In the 70S ribosome, L14 and L19 interact and together make contacts with the 16S rRNA in bridges B5 and B8.

Binds to 23S rRNA. Forms part of two intersubunit bridges in the 70S ribosome. This chain is Large ribosomal subunit protein uL14, found in Mycoplasmoides gallisepticum (strain R(low / passage 15 / clone 2)) (Mycoplasma gallisepticum).